We begin with the raw amino-acid sequence, 273 residues long: Transposable element Tc1 transposase (273 aa).

It belongs to the transposase 5 family.

Its subcellular location is the nucleus. Its function is as follows. Probably essential for transposable element Tc1 transposition. The insertion of Tc1 is the main cause of spontaneous mutations. It is an endonuclease which can produce a single strand nick at the 5'-end of the transposon. In Caenorhabditis elegans, this protein is Transposable element Tc1 transposase (tc1a).